The following is a 600-amino-acid chain: Alanine--tRNA ligase (600 aa).

Zn(2+)-binding residues include His463, His467, Cys565, and His569.

It belongs to the class-II aminoacyl-tRNA synthetase family. It depends on Zn(2+) as a cofactor.

It is found in the cytoplasm. It carries out the reaction tRNA(Ala) + L-alanine + ATP = L-alanyl-tRNA(Ala) + AMP + diphosphate. Catalyzes the attachment of alanine to tRNA(Ala) in a two-step reaction: alanine is first activated by ATP to form Ala-AMP and then transferred to the acceptor end of tRNA(Ala). Also edits incorrectly charged Ser-tRNA(Ala) and Gly-tRNA(Ala) via its editing domain. The polypeptide is Alanine--tRNA ligase (alaS) (Treponema denticola (strain ATCC 35405 / DSM 14222 / CIP 103919 / JCM 8153 / KCTC 15104)).